A 521-amino-acid chain; its full sequence is GMP synthase [glutamine-hydrolyzing] (521 aa).

Positions Lys8 to Leu203 constitute a Glutamine amidotransferase type-1 domain. Cys85 serves as the catalytic Nucleophile. Catalysis depends on residues His177 and Glu179. The GMPS ATP-PPase domain occupies Trp204–Arg396. Ser231 to Ser237 is an ATP binding site.

In terms of assembly, homodimer.

The enzyme catalyses XMP + L-glutamine + ATP + H2O = GMP + L-glutamate + AMP + diphosphate + 2 H(+). It participates in purine metabolism; GMP biosynthesis; GMP from XMP (L-Gln route): step 1/1. Its function is as follows. Catalyzes the synthesis of GMP from XMP. The chain is GMP synthase [glutamine-hydrolyzing] from Stenotrophomonas maltophilia (strain R551-3).